Here is a 1051-residue protein sequence, read N- to C-terminus: Carbamoyl phosphate synthase large chain (1051 aa).

The segment at 1-399 (MKETPKKVLV…SLQKAVRMLD (399 aa)) is carboxyphosphate synthetic domain. ATP is bound by residues Arg-127, Arg-167, Gly-173, Gly-174, Lys-206, Leu-208, Glu-213, Gly-239, Val-240, His-241, Gln-282, and Glu-296. Positions 131–325 (RETMIENNLP…LAYVSAKLAL (195 aa)) constitute an ATP-grasp 1 domain. 3 residues coordinate Mg(2+): Gln-282, Glu-296, and Asn-298. Mn(2+)-binding residues include Gln-282, Glu-296, and Asn-298. The interval 400-548 (IGEPGVVGGK…LTYNGTEDDL (149 aa)) is oligomerization domain. Positions 549-930 (EFSQGNKLLI…LKSWLSSIPN (382 aa)) are carbamoyl phosphate synthetic domain. An ATP-grasp 2 domain is found at 673-863 (SKLLDKLGIS…LINEAMKAIF (191 aa)). The ATP site is built by Arg-709, Lys-748, Ile-750, Glu-755, Gly-779, Val-780, His-781, Ser-782, Gln-822, and Glu-834. Positions 822, 834, and 836 each coordinate Mg(2+). Residues Gln-822, Glu-834, and Asn-836 each coordinate Mn(2+). Residues 930–1051 (NRIPNKNGIA…FEISEYGGGI (122 aa)) form the MGS-like domain. An allosteric domain region spans residues 931–1051 (RIPNKNGIAL…FEISEYGGGI (121 aa)).

Belongs to the CarB family. As to quaternary structure, composed of two chains; the small (or glutamine) chain promotes the hydrolysis of glutamine to ammonia, which is used by the large (or ammonia) chain to synthesize carbamoyl phosphate. Tetramer of heterodimers (alpha,beta)4. Mg(2+) is required as a cofactor. It depends on Mn(2+) as a cofactor.

It catalyses the reaction hydrogencarbonate + L-glutamine + 2 ATP + H2O = carbamoyl phosphate + L-glutamate + 2 ADP + phosphate + 2 H(+). It carries out the reaction hydrogencarbonate + NH4(+) + 2 ATP = carbamoyl phosphate + 2 ADP + phosphate + 2 H(+). Its pathway is amino-acid biosynthesis; L-arginine biosynthesis; carbamoyl phosphate from bicarbonate: step 1/1. It functions in the pathway pyrimidine metabolism; UMP biosynthesis via de novo pathway; (S)-dihydroorotate from bicarbonate: step 1/3. In terms of biological role, large subunit of the glutamine-dependent carbamoyl phosphate synthetase (CPSase). CPSase catalyzes the formation of carbamoyl phosphate from the ammonia moiety of glutamine, carbonate, and phosphate donated by ATP, constituting the first step of 2 biosynthetic pathways, one leading to arginine and/or urea and the other to pyrimidine nucleotides. The large subunit (synthetase) binds the substrates ammonia (free or transferred from glutamine from the small subunit), hydrogencarbonate and ATP and carries out an ATP-coupled ligase reaction, activating hydrogencarbonate by forming carboxy phosphate which reacts with ammonia to form carbamoyl phosphate. This Saccharolobus islandicus (strain L.S.2.15 / Lassen #1) (Sulfolobus islandicus) protein is Carbamoyl phosphate synthase large chain.